The chain runs to 345 residues: Low-density lipoprotein receptor class A domain-containing protein 3 (345 aa).

A signal peptide spans 1-17; that stretch reads MWLLGPLCLLLSSAAES. Topologically, residues 18-173 are extracellular; it reads QLLPGNNFTN…NQLVYYPSIT (156 aa). Asparagine 24 carries an N-linked (GlcNAc...) asparagine glycan. LDL-receptor class A domains are found at residues 28-65, 70-107, and 112-148; these read ECNIPGNFMCSNGRCIPGAWQCDGLPDCFDKSDEKECP, KCGPTFFPCASGIHCIIGRFRCNGFEDCPDGSDEENCT, and LCSTARYHCKNGLCIDKSFICDGQNNCQDNSDEESCE. Disulfide bonds link cysteine 29–cysteine 42, cysteine 37–cysteine 55, cysteine 49–cysteine 64, cysteine 71–cysteine 84, cysteine 78–cysteine 97, cysteine 91–cysteine 106, cysteine 113–cysteine 125, cysteine 120–cysteine 138, and cysteine 132–cysteine 147. The segment at 30–57 is (Microbial infection) Interaction with Venezuelan equine encephalitis virus/VEEV spike proteins E1 and E2; the sequence is NIPGNFMCSNGRCIPGAWQCDGLPDCFD. The chain crosses the membrane as a helical span at residues 174–194; that stretch reads YAIIGSSVIFVLVVALLALVL. Over 195–345 the chain is Cytoplasmic; the sequence is HHQRKRNNLM…SEPSQGTEEV (151 aa). 2 short sequence motifs (involved in ITCH interaction) span residues 256–259 and 275–278; these read PPSY and PPPY. The tract at residues 270 to 345 is disordered; sequence WYDLPPPPYS…SEPSQGTEEV (76 aa). A compositionally biased stretch (low complexity) spans 295 to 313; sequence SRSGSANSASSQAASSLLS.

Belongs to the LDLR family. In terms of assembly, interacts with APP precursor C-terminus. Interacts directly with ITCH; this interaction promotes ITCH auto-ubiquitination leading to its degradation. Interacts directly with NEDD4; this interaction promotes NEDD4 auto-ubiquitination. Interacts directly with NEDD4L. As to quaternary structure, (Microbial infection) Interacts (via domain LDL-receptor class A 1) with Venezuelan equine encephalitis virus/VEEV spike proteins E1 and E2. In terms of tissue distribution, expressed at high levels in brain, lung, skeletal muscle, and pancreas. Expressed at moderate levels in heart, placenta, and kidney but not detected in the liver.

Its subcellular location is the cell membrane. Its function is as follows. May influence APP processing, resulting in a decrease in sAPP-alpha production and increased amyloidogenic P3 peptide production. May regulate ITCH and NEDD4 E3 ligase activity and degradation. In terms of biological role, (Microbial infection) Acts as a receptor for Venezuelan equine encephalitis virus. This Homo sapiens (Human) protein is Low-density lipoprotein receptor class A domain-containing protein 3.